Here is a 335-residue protein sequence, read N- to C-terminus: Beta-ketoacyl-[acyl-carrier-protein] synthase III 1 (335 aa).

Active-site residues include Cys-116 and His-256. Residues 257-261 are ACP-binding; that stretch reads QANQR. Asn-286 is a catalytic residue.

This sequence belongs to the thiolase-like superfamily. FabH family. In terms of assembly, homodimer.

It is found in the cytoplasm. It catalyses the reaction malonyl-[ACP] + acetyl-CoA + H(+) = 3-oxobutanoyl-[ACP] + CO2 + CoA. It participates in lipid metabolism; fatty acid biosynthesis. In terms of biological role, catalyzes the condensation reaction of fatty acid synthesis by the addition to an acyl acceptor of two carbons from malonyl-ACP. Catalyzes the first condensation reaction which initiates fatty acid synthesis and may therefore play a role in governing the total rate of fatty acid production. Possesses both acetoacetyl-ACP synthase and acetyl transacylase activities. Its substrate specificity determines the biosynthesis of branched-chain and/or straight-chain of fatty acids. This is Beta-ketoacyl-[acyl-carrier-protein] synthase III 1 from Bacteroides thetaiotaomicron (strain ATCC 29148 / DSM 2079 / JCM 5827 / CCUG 10774 / NCTC 10582 / VPI-5482 / E50).